Reading from the N-terminus, the 377-residue chain is MSVLFTILLMAVIGGFIGAMTNYIAIRMLFRPYKAIYLFNKRLPFTPGLIPKRRDELAEHIGKVVVSHLLTEDAIRARLLDENLQKEITDTITKMFHEKMKLETTPNELLHHFGYENAEIRSMAWIEKTLEKEINHFLSTKKTTKMSDLIPTMLESELTTKLPHVTERITSKMTLFVASEEGKIQIKQMLQKFFEEHGKMGSMARMFINIDSFSEKIQQEGLKLIGQEDTKNLINQLLTTEWKNFEAKELQELIPTEKQAHLAGQLTSELIQTLPHEKLFNQPIQVILRGYEAAITEKVIPFAVERMLDFVATHSAEIVERMDLAKLVETQIATFSLPEIEKLVVEISGRELKMITYLGGILGGFIGIIQGILAMWI.

A run of 2 helical transmembrane segments spans residues 1–21 (MSVL…GAMT) and 357–377 (YLGG…AMWI).

This sequence belongs to the UPF0754 family.

The protein resides in the cell membrane. This Listeria monocytogenes serovar 1/2a (strain ATCC BAA-679 / EGD-e) protein is UPF0754 membrane protein lmo2224.